A 961-amino-acid chain; its full sequence is E3 ubiquitin-protein ligase TRIM37 (961 aa).

M1 bears the N-acetylmethionine mark. The RING-type; degenerate zinc-finger motif lies at 15-55 (CFICMEKLRDARLCPHCSKLCCFSCIRRWLTEQRAQCPHCR). The B box-type zinc finger occupies 90-132 (NEKDKCENHHEKLSVFCWTCKKCICHQCALWGGMHGGHTFKPL). Positions 95, 98, 117, and 124 each coordinate Zn(2+). A coiled-coil region spans residues 132-234 (LAEIYEQHVT…VEHQLRSCSK (103 aa)). The region spanning 276–403 (YDSATFVLEN…NDTVILRFQV (128 aa)) is the MATH domain. Residues 419-450 (ITQLEAAQTGYIQQINNLKERLTIELSRTQKS) adopt a coiled-coil conformation. 5 disordered regions span residues 447-514 (TQKS…HHEL), 529-561 (VNHLDGSSSSASSTATSNTEENDIDEETMSGEN), 645-665 (SLLQPTASYSRKDKDQRKQQA), 776-811 (AVDSGENSRSKGDCQVLAEGSSGSSQSGSRHSSPRA), and 874-961 (LESH…GGGR). At S454 the chain carries Phosphoserine. The span at 504–514 (KIQNEDYHHEL) shows a compositional bias: basic and acidic residues. Over residues 535–545 (SSSSASSTATS) the composition is skewed to low complexity. Acidic residues predominate over residues 548 to 561 (EENDIDEETMSGEN). Residues 776-787 (AVDSGENSRSKG) are compositionally biased toward basic and acidic residues. Low complexity predominate over residues 795–806 (GSSGSSQSGSRH). Residues 903-915 (SDIECDTENEEQE) show a composition bias toward acidic residues.

Belongs to the TRIM/RBCC family. Associates with the PRC2/EED-EZH2 complex. Auto-ubiquitinated. In terms of tissue distribution, highly expressed in testis and brain. In embryonic tissues, expressed in epithelia, including ducts of the developing pancreas, epithelium of the midgut and nasal epithelium. In adult, detected in the central and peripheral nervous systems, including enteric ganglia, retina and the adrenal medulla (at protein level).

The protein localises to the chromosome. It localises to the cytoplasm. Its subcellular location is the perinuclear region. The protein resides in the peroxisome membrane. It catalyses the reaction S-ubiquitinyl-[E2 ubiquitin-conjugating enzyme]-L-cysteine + [acceptor protein]-L-lysine = [E2 ubiquitin-conjugating enzyme]-L-cysteine + N(6)-ubiquitinyl-[acceptor protein]-L-lysine.. It participates in protein modification; protein ubiquitination. Functionally, E3 ubiquitin-protein ligase required to prevent centriole reduplication. Probably acts by ubiquitinating positive regulators of centriole reduplication. Mediates monoubiquitination of 'Lys-119' of histone H2A (H2AK119Ub), a specific tag for epigenetic transcriptional repression: associates with some Polycomb group (PcG) multiprotein PRC2-like complex and mediates repression of target genes. Also acts as a positive regulator of peroxisome import by mediating monoubiquitination of PEX5 at 'Lys-472': monoubiquitination promotes PEX5 stabilitation by preventing its polyubiquitination and degradation by the proteasome. This Mus musculus (Mouse) protein is E3 ubiquitin-protein ligase TRIM37.